The following is a 305-amino-acid chain: D-alanine--D-alanine ligase (305 aa).

In terms of domain architecture, ATP-grasp spans 105–300 (KMIWQAAGIN…FDELVVQILE (196 aa)). 131–186 (ADRLGLPLIIKPAREGSTLGLNKVDNEQDFRSAYQAAAEYDSLVLAEQFIQGIELT) provides a ligand contact to ATP. The Mg(2+) site is built by Asp254, Glu267, and Asn269.

The protein belongs to the D-alanine--D-alanine ligase family. It depends on Mg(2+) as a cofactor. Mn(2+) is required as a cofactor.

The protein localises to the cytoplasm. It catalyses the reaction 2 D-alanine + ATP = D-alanyl-D-alanine + ADP + phosphate + H(+). It participates in cell wall biogenesis; peptidoglycan biosynthesis. Functionally, cell wall formation. This is D-alanine--D-alanine ligase from Nitrosomonas europaea (strain ATCC 19718 / CIP 103999 / KCTC 2705 / NBRC 14298).